Here is a 701-residue protein sequence, read N- to C-terminus: 2-isopropylmalate synthase (701 aa).

The disordered stretch occupies residues methionine 1–serine 40. A compositionally biased stretch (polar residues) spans proline 31–serine 40. The Pyruvate carboxyltransferase domain occupies proline 72–aspartate 346. Mg(2+)-binding residues include aspartate 81, histidine 285, histidine 287, and asparagine 321. A regulatory domain region spans residues proline 491–arginine 701. Residues valine 575–proline 593 form a VNTR1 repeat. Residues alanine 581–valine 670 are disordered. The VNTR2 repeat unit spans residues valine 594–proline 612. One copy of the VNTR3 repeat lies at valine 613–proline 631. The stretch at valine 632–proline 650 is one VNTR4 repeat. The stretch at valine 651–proline 669 is one VNTR5 repeat.

This sequence belongs to the alpha-IPM synthase/homocitrate synthase family. LeuA type 2 subfamily. Homodimer. Mg(2+) serves as cofactor.

It localises to the cytoplasm. It carries out the reaction 3-methyl-2-oxobutanoate + acetyl-CoA + H2O = (2S)-2-isopropylmalate + CoA + H(+). The protein operates within amino-acid biosynthesis; L-leucine biosynthesis; L-leucine from 3-methyl-2-oxobutanoate: step 1/4. Functionally, catalyzes the condensation of the acetyl group of acetyl-CoA with 3-methyl-2-oxobutanoate (2-ketoisovalerate) to form 3-carboxy-3-hydroxy-4-methylpentanoate (2-isopropylmalate). The sequence is that of 2-isopropylmalate synthase from Mycobacterium bovis (strain ATCC BAA-935 / AF2122/97).